The primary structure comprises 839 residues: Homeobox-leucine zipper protein HOX10 (839 aa).

2 disordered regions span residues 1-24 and 132-157; these read MAAA…SGMD and QNTP…RDAS. Residues 24–87 constitute a DNA-binding region (homeobox); the sequence is DSGKYVRYTP…NRRCRDKQRK (64 aa). Residues 91–134 are a coiled coil; that stretch reads RLQAVNRKLTAMNKLLMEENERLQKQVSQLVHENAHMRQQLQNT. One can recognise an START domain in the interval 155–383; it reads DASNPSGLLS…IAQETSGEVV (229 aa).

This sequence belongs to the HD-ZIP homeobox family. Class III subfamily. In terms of tissue distribution, expressed in stems, leaf sheaths and blades and panicles.

The protein localises to the nucleus. In terms of biological role, probable transcription factor. The chain is Homeobox-leucine zipper protein HOX10 (HOX10) from Oryza sativa subsp. japonica (Rice).